A 486-amino-acid chain; its full sequence is Vacuolar-processing enzyme beta-isozyme (486 aa).

Residues 1 to 21 (MAKSCYFRPALLLLLVLLVHA) form the signal peptide. H169 is an active-site residue. The active-site Nucleophile is the C211. Cysteines 244 and 258 form a disulfide. N309 is a glycosylation site (N-linked (GlcNAc...) asparagine). 2 cysteine pairs are disulfide-bonded: C420/C450 and C432/C467.

This sequence belongs to the peptidase C13 family. Auto-catalytic activation. As to expression, seed specific. Also expressed in the flowers and buds.

The protein localises to the vacuole. It localises to the protein storage vacuole. The catalysed reaction is Hydrolysis of proteins and small molecule substrates at -Asn-|-Xaa- bonds.. In terms of biological role, asparagine-specific endopeptidase involved in the processing of vacuolar seed protein precursors into the mature forms. Probably involved in post-translational proteolysis of seed storage proteins in the protein storage vacuole of developing seeds. This chain is Vacuolar-processing enzyme beta-isozyme, found in Arabidopsis thaliana (Mouse-ear cress).